The primary structure comprises 248 residues: Myelin protein P0 (248 aa).

The first 29 residues, 1–29, serve as a signal peptide directing secretion; sequence MAPGAPSSSPSPILAVLLFSSLVLSPAQA. In terms of domain architecture, Ig-like V-type spans 30–143; that stretch reads IVVYTDREVH…DIVGKTSQVT (114 aa). The Extracellular segment spans residues 30–153; sequence IVVYTDREVH…LYVFEKVPTR (124 aa). Cysteine 50 and cysteine 127 are joined by a disulfide. A glycan (N-linked (GlcNAc...) (complex) asparagine) is linked at asparagine 122. Residues 154–179 form a helical membrane-spanning segment; that stretch reads YGVVLGAVIGGVLGVVLLLLLLFYVV. Residues 180–248 lie on the Cytoplasmic side of the membrane; sequence RYCWLRRQAA…GLGESRKDKK (69 aa). Serine 210 is subject to Phosphoserine; by PKC. Positions 224 to 248 are disordered; that stretch reads DHSRSTKAVSEKKAKGLGESRKDKK. Residues serine 226 and serine 228 each carry the phosphoserine modification. 2 positions are modified to phosphoserine; by PKC: serine 233 and serine 243.

It belongs to the myelin P0 protein family. Homodimer and homotetramer. N-glycosylated; contains sulfate-substituted glycan. As to expression, found only in peripheral nervous system Schwann cells.

Its subcellular location is the cell membrane. It is found in the myelin membrane. In terms of biological role, is an adhesion molecule necessary for normal myelination in the peripheral nervous system. It mediates adhesion between adjacent myelin wraps and ultimately drives myelin compaction. The protein is Myelin protein P0 (MPZ) of Homo sapiens (Human).